Reading from the N-terminus, the 145-residue chain is D-aminoacyl-tRNA deacylase (145 aa).

Residues 137–138 (GP) carry the Gly-cisPro motif, important for rejection of L-amino acids motif.

This sequence belongs to the DTD family. In terms of assembly, homodimer.

It is found in the cytoplasm. It carries out the reaction glycyl-tRNA(Ala) + H2O = tRNA(Ala) + glycine + H(+). The catalysed reaction is a D-aminoacyl-tRNA + H2O = a tRNA + a D-alpha-amino acid + H(+). Its function is as follows. An aminoacyl-tRNA editing enzyme that deacylates mischarged D-aminoacyl-tRNAs. Also deacylates mischarged glycyl-tRNA(Ala), protecting cells against glycine mischarging by AlaRS. Acts via tRNA-based rather than protein-based catalysis; rejects L-amino acids rather than detecting D-amino acids in the active site. By recycling D-aminoacyl-tRNA to D-amino acids and free tRNA molecules, this enzyme counteracts the toxicity associated with the formation of D-aminoacyl-tRNA entities in vivo and helps enforce protein L-homochirality. The sequence is that of D-aminoacyl-tRNA deacylase from Escherichia coli O81 (strain ED1a).